Consider the following 518-residue polypeptide: MDFTEAYADTCSTVGLAAREGNVKVLRKLLKKGRSVDVADNRGWMPIHEAAYHNSVECLQMLINADSSENYIKMKTFEGFCALHLAASQGHWKIVQILLEAGADPNATTLEETTPLFLAVENGQIDVLRLLLQHGANVNGSHSMCGWNSLHQASFQENAEIIKLLLRKGANKECQDDFGITPLFVAAQYGKLESLSILISSGANVNCQALDKATPLFIAAQEGHTKCVELLLSSGADPDLYCNEDSWQLPIHAAAQMGHTKILDLLIPLTNRACDTGLNKVSPVYSAVFGGHEDCLEILLRNGYSPDAQACLVFGFSSPVCMAFQKDCEFFGIVNILLKYGAQINELHLAYCLKYEKFSIFRYFLRKGCSLGPWNHIYEFVNHAIKAQAKYKEWLPHLLVAGFDPLILLCNSWIDSVSIDTLIFTLEFTNWKTLAPAVERMLSARASNAWILQQHIATVPSLTHLCRLEIRSSLKSERLRSDSYISQLPLPRSLHNYLLYEDVLRMYEVPELAAIQDG.

ANK repeat units lie at residues 9–38 (DTCSTVGLAAREGNVKVLRKLLKKGRSVDV), 42–71 (RGWMPIHEAAYHNSVECLQMLINADSSENY), 78–107 (EGFCALHLAASQGHWKIVQILLEAGADPNA), 111–140 (EETTPLFLAVENGQIDVLRLLLQHGANVNG), 145–174 (CGWNSLHQASFQENAEIIKLLLRKGANKEC), 178–207 (FGITPLFVAAQYGKLESLSILISSGANVNC), 211–240 (DKATPLFIAAQEGHTKCVELLLSSGADPDL), 246–275 (SWQLPIHAAAQMGHTKILDLLIPLTNRACD), 279–308 (NKVSPVYSAVFGGHEDCLEILLRNGYSPDA), 315–346 (GFSSPVCMAFQKDCEFFGIVNILLKYGAQINE), and 348–373 (HLAYCLKYEKFSIFRYFLRKGCSLGP). One can recognise an SOCS box domain in the interval 441–504 (MLSARASNAW…HNYLLYEDVL (64 aa)).

The protein belongs to the ankyrin SOCS box (ASB) family. In terms of assembly, interacts with ELOB and TNFRSF1B.

Its subcellular location is the cytoplasm. The protein operates within protein modification; protein ubiquitination. Probable substrate-recognition component of a SCF-like ECS (Elongin-Cullin-SOCS-box protein) E3 ubiquitin-protein ligase complex which mediates the ubiquitination and subsequent proteasomal degradation of target proteins. Recognizes TNFRSF1B. Plays a role in the down-regulation of antiviral innate immunity by targeting MAVS for ubiquitin-proteasomal degradation. Also destabilizes TRAF6 by enhancing its 'Lys-48'-linked polyubiquitination. In Homo sapiens (Human), this protein is Ankyrin repeat and SOCS box protein 3 (ASB3).